A 68-amino-acid polypeptide reads, in one-letter code: Ribosome modulation factor (68 aa).

It belongs to the ribosome modulation factor family.

It localises to the cytoplasm. Its function is as follows. During stationary phase, converts 70S ribosomes to an inactive dimeric form (100S ribosomes). In Alcanivorax borkumensis (strain ATCC 700651 / DSM 11573 / NCIMB 13689 / SK2), this protein is Ribosome modulation factor.